Consider the following 331-residue polypeptide: Lipoyl synthase (331 aa).

Cysteine 74, cysteine 79, cysteine 85, cysteine 100, cysteine 104, cysteine 107, and serine 314 together coordinate [4Fe-4S] cluster. Residues 85 to 303 (CFGKGTATFM…ETEAYKMGFT (219 aa)) form the Radical SAM core domain.

Belongs to the radical SAM superfamily. Lipoyl synthase family. The cofactor is [4Fe-4S] cluster.

The protein resides in the cytoplasm. It carries out the reaction [[Fe-S] cluster scaffold protein carrying a second [4Fe-4S](2+) cluster] + N(6)-octanoyl-L-lysyl-[protein] + 2 oxidized [2Fe-2S]-[ferredoxin] + 2 S-adenosyl-L-methionine + 4 H(+) = [[Fe-S] cluster scaffold protein] + N(6)-[(R)-dihydrolipoyl]-L-lysyl-[protein] + 4 Fe(3+) + 2 hydrogen sulfide + 2 5'-deoxyadenosine + 2 L-methionine + 2 reduced [2Fe-2S]-[ferredoxin]. The protein operates within protein modification; protein lipoylation via endogenous pathway; protein N(6)-(lipoyl)lysine from octanoyl-[acyl-carrier-protein]: step 2/2. Catalyzes the radical-mediated insertion of two sulfur atoms into the C-6 and C-8 positions of the octanoyl moiety bound to the lipoyl domains of lipoate-dependent enzymes, thereby converting the octanoylated domains into lipoylated derivatives. This chain is Lipoyl synthase, found in Leptothrix cholodnii (strain ATCC 51168 / LMG 8142 / SP-6) (Leptothrix discophora (strain SP-6)).